Reading from the N-terminus, the 153-residue chain is Protein ripply2.2 (153 aa).

A WRPW motif; required for transcriptional repression and interaction with tle4 motif is present at residues 58–61 (WRPW). The ripply homology domain stretch occupies residues 93-128 (HPVRLFWPKSKLLDNTYQEAADLLRNFPVQATISLY). Residues 127–153 (LYNDSESDTDNEEDSSEEEQDSGFESE) are disordered. Over residues 131–153 (SESDTDNEEDSSEEEQDSGFESE) the composition is skewed to acidic residues.

The protein belongs to the ripply family. In terms of assembly, interacts with tle4 and tbx6, and mediates interaction between these proteins. In terms of tissue distribution, expressed in the presomitic mesoderm (PSM) in the anterior halves of somitomeres S-I, S-II and S-III.

The protein localises to the nucleus. Functionally, required during somitogenesis for the formation of somite boundaries. Represses the expression of genes involved in somite segmentation by acting with the corepressor tle4 to down-regulate the transcriptional activity of tbx6. May act by regulating the activity of tle4. Represses transcription of delta2, thy1 and ripply2.2/bowline itself. In Xenopus laevis (African clawed frog), this protein is Protein ripply2.2 (ripply2.2).